We begin with the raw amino-acid sequence, 362 residues long: Heat-inducible transcription repressor HrcA (362 aa).

It belongs to the HrcA family.

Negative regulator of class I heat shock genes (grpE-dnaK-dnaJ and groELS operons). Prevents heat-shock induction of these operons. The sequence is that of Heat-inducible transcription repressor HrcA from Rhizobium johnstonii (strain DSM 114642 / LMG 32736 / 3841) (Rhizobium leguminosarum bv. viciae).